A 115-amino-acid polypeptide reads, in one-letter code: Large ribosomal subunit protein bL19 (115 aa).

This sequence belongs to the bacterial ribosomal protein bL19 family.

In terms of biological role, this protein is located at the 30S-50S ribosomal subunit interface and may play a role in the structure and function of the aminoacyl-tRNA binding site. This Francisella tularensis subsp. holarctica (strain FTNF002-00 / FTA) protein is Large ribosomal subunit protein bL19.